Consider the following 358-residue polypeptide: Mitogen-activated protein kinase 1 (358 aa).

Ala-2 is modified (N-acetylalanine). A Protein kinase domain is found at 23–311 (YTNLSYIGEG…VEQALAHPYL (289 aa)). Ser-27 carries the phosphoserine; by SGK1 modification. Residues 29 to 37 (IGEGAYGMV) and Lys-52 contribute to the ATP site. The active-site Proton acceptor is the Asp-147. A Phosphothreonine; by MAP2K1 and MAP2K2 modification is found at Thr-183. The short motif at 183–185 (TEY) is the TXY element. A Phosphotyrosine; by MAP2K1 and MAP2K2 modification is found at Tyr-185. Thr-188 is subject to Phosphothreonine; by autocatalysis. Ser-244, Ser-246, and Ser-282 each carry phosphoserine.

This sequence belongs to the protein kinase superfamily. CMGC Ser/Thr protein kinase family. MAP kinase subfamily. As to quaternary structure, binds both upstream activators and downstream substrates in multimolecular complexes. This interaction inhibits its tyrosine-kinase activity. Interacts with ADAM15, ARHGEF2, ARRB2, DAPK1 (via death domain), HSF4, IER3, IPO7, NISCH, SGK1, and isoform 1 of NEK2. Interacts (via phosphorylated form) with TPR (via C-terminal region and phosphorylated form); the interaction requires dimerization of MAPK1/ERK2 and increases following EGF stimulation. Interacts with MAP2K1. Interacts with DUSP6. Interacts (phosphorylated form) with CAV2 ('Tyr-19'-phosphorylated form); the interaction, promoted by insulin, leads to nuclear location and MAPK1 activation. Interacts with DCC. Interacts with MORG1. Interacts with PEA15. Interacts with MKNK2. MKNK2 isoform 1 binding prevents from dephosphorylation and inactivation. The phosphorylated form interacts with PML. Interacts with STYX. Interacts with CDK2AP2. Interacts with CAVIN4. Interacts with DUSP7; the interaction enhances DUSP7 phosphatase activity. Interacts with GIT1; this interaction is necessary for MAPK1 localization to focal adhesions. Interacts with ZNF263. Interacts with phosphoglycerate kinase PGK1; the interaction is direct, occurs under hypoxic conditions, and promotes interaction between PGK1 and PIN1. Mg(2+) serves as cofactor. Dually phosphorylated on Thr-183 and Tyr-185, which activates the enzyme. Ligand-activated ALK induces tyrosine phosphorylation. Dephosphorylated by PTPRJ at Tyr-185. Phosphorylated upon FLT3 and KIT signaling. Dephosphorylated by DUSP1 and DUSP2 at Thr-183 and Tyr-185. Post-translationally, ISGylated. In terms of processing, ubiquitinated by TRIM15 via 'Lys-63'-linked ubiquitination; leading to activation. Deubiquitinated by CYLD. As to expression, widely expressed.

The protein resides in the cytoplasm. It localises to the cytoskeleton. The protein localises to the spindle. It is found in the nucleus. Its subcellular location is the microtubule organizing center. The protein resides in the centrosome. It localises to the membrane. The protein localises to the caveola. It is found in the cell junction. Its subcellular location is the focal adhesion. It carries out the reaction L-seryl-[protein] + ATP = O-phospho-L-seryl-[protein] + ADP + H(+). It catalyses the reaction L-threonyl-[protein] + ATP = O-phospho-L-threonyl-[protein] + ADP + H(+). Its activity is regulated as follows. Phosphorylated by MAP2K1/MEK1 and MAP2K2/MEK2 on Thr-183 and Tyr-185 in response to external stimuli like insulin or NGF. Both phosphorylations are required for activity. This phosphorylation causes dramatic conformational changes, which enable full activation and interaction of MAPK1/ERK2 with its substrates. Phosphorylation on Ser-27 by SGK1 results in its activation by enhancing its interaction with MAP2K1/MEK1 and MAP2K2/MEK2. Dephosphorylated and inactivated by DUSP1, DUSP3, DUSP6 and DUSP9. Inactivated by pyrimidylpyrrole inhibitors. Serine/threonine kinase which acts as an essential component of the MAP kinase signal transduction pathway. MAPK1/ERK2 and MAPK3/ERK1 are the 2 MAPKs which play an important role in the MAPK/ERK cascade. They participate also in a signaling cascade initiated by activated KIT and KITLG/SCF. Depending on the cellular context, the MAPK/ERK cascade mediates diverse biological functions such as cell growth, adhesion, survival and differentiation through the regulation of transcription, translation, cytoskeletal rearrangements. The MAPK/ERK cascade also plays a role in initiation and regulation of meiosis, mitosis, and postmitotic functions in differentiated cells by phosphorylating a number of transcription factors. About 160 substrates have already been discovered for ERKs. Many of these substrates are localized in the nucleus, and seem to participate in the regulation of transcription upon stimulation. However, other substrates are found in the cytosol as well as in other cellular organelles, and those are responsible for processes such as translation, mitosis and apoptosis. Moreover, the MAPK/ERK cascade is also involved in the regulation of the endosomal dynamics, including lysosome processing and endosome cycling through the perinuclear recycling compartment (PNRC); as well as in the fragmentation of the Golgi apparatus during mitosis. The substrates include transcription factors (such as ATF2, BCL6, ELK1, ERF, FOS, HSF4 or SPZ1), cytoskeletal elements (such as CANX, CTTN, GJA1, MAP2, MAPT, PXN, SORBS3 or STMN1), regulators of apoptosis (such as BAD, BTG2, CASP9, DAPK1, IER3, MCL1 or PPARG), regulators of translation (such as EIF4EBP1 and FXR1) and a variety of other signaling-related molecules (like ARHGEF2, DCC, FRS2 or GRB10). Protein kinases (such as RAF1, RPS6KA1/RSK1, RPS6KA3/RSK2, RPS6KA2/RSK3, RPS6KA6/RSK4, SYK, MKNK1/MNK1, MKNK2/MNK2, RPS6KA5/MSK1, RPS6KA4/MSK2, MAPKAPK3 or MAPKAPK5) and phosphatases (such as DUSP1, DUSP4, DUSP6 or DUSP16) are other substrates which enable the propagation the MAPK/ERK signal to additional cytosolic and nuclear targets, thereby extending the specificity of the cascade. Mediates phosphorylation of TPR in response to EGF stimulation. May play a role in the spindle assembly checkpoint. Phosphorylates PML and promotes its interaction with PIN1, leading to PML degradation. Phosphorylates CDK2AP2. Phosphorylates phosphoglycerate kinase PGK1 under hypoxic conditions to promote its targeting to the mitochondrion and suppress the formation of acetyl-coenzyme A from pyruvate. Functionally, acts as a transcriptional repressor. Binds to a [GC]AAA[GC] consensus sequence. Repress the expression of interferon gamma-induced genes. Seems to bind to the promoter of CCL5, DMP1, IFIH1, IFITM1, IRF7, IRF9, LAMP3, OAS1, OAS2, OAS3 and STAT1. Transcriptional activity is independent of kinase activity. This is Mitogen-activated protein kinase 1 from Mus musculus (Mouse).